Reading from the N-terminus, the 395-residue chain is Xylose isomerase (395 aa).

Residues His-54 and Asp-57 contribute to the active site. The Mg(2+) site is built by Glu-181, Glu-217, His-220, Asp-245, Asp-255, Asp-257, and Asp-293.

Belongs to the xylose isomerase family. As to quaternary structure, homotetramer. Mg(2+) serves as cofactor.

Its subcellular location is the cytoplasm. The enzyme catalyses alpha-D-xylose = alpha-D-xylulofuranose. This Arthrobacter sp. (strain FB24) protein is Xylose isomerase.